The primary structure comprises 318 residues: Homoserine O-succinyltransferase (318 aa).

The active-site Acyl-thioester intermediate is the cysteine 142. Residues lysine 163 and serine 192 each contribute to the substrate site. Residue histidine 235 is the Proton acceptor of the active site. The active site involves glutamate 237. Substrate is bound at residue arginine 249.

Belongs to the MetA family.

The protein localises to the cytoplasm. The catalysed reaction is L-homoserine + succinyl-CoA = O-succinyl-L-homoserine + CoA. The protein operates within amino-acid biosynthesis; L-methionine biosynthesis via de novo pathway; O-succinyl-L-homoserine from L-homoserine: step 1/1. Transfers a succinyl group from succinyl-CoA to L-homoserine, forming succinyl-L-homoserine. In Shewanella putrefaciens (strain CN-32 / ATCC BAA-453), this protein is Homoserine O-succinyltransferase.